The sequence spans 452 residues: Phosphoglucosamine mutase (452 aa).

Ser-108 functions as the Phosphoserine intermediate in the catalytic mechanism. Mg(2+) contacts are provided by Ser-108, Asp-247, Asp-249, and Asp-251. The residue at position 108 (Ser-108) is a Phosphoserine.

It belongs to the phosphohexose mutase family. The cofactor is Mg(2+). In terms of processing, activated by phosphorylation.

It catalyses the reaction alpha-D-glucosamine 1-phosphate = D-glucosamine 6-phosphate. Functionally, catalyzes the conversion of glucosamine-6-phosphate to glucosamine-1-phosphate. The chain is Phosphoglucosamine mutase from Paraburkholderia phymatum (strain DSM 17167 / CIP 108236 / LMG 21445 / STM815) (Burkholderia phymatum).